A 432-amino-acid polypeptide reads, in one-letter code: MTQAISDIKAYMQQVGKHARDASRQLAAANTGDKNAALLIIYEQLKQAKDEILAANKIDMDKGRSNNLDAALLDRLALNESRFEAMLQGLKDVAALPDPIGEVTDMTYRPSGIQLGKMRVPLGVVGMIYESRPNVTLEAASLALKSGNAIILRGGSEAYESNQAIAKYILSGLKQAGLPEHGVQVLQTTDRAAVGELITLTEYVDVIVPRGGKGLIARISQDARVPVIKHLDGNCHTFIDSDADPEIAIKVSVNAKTHRYGTCNTMETLLVDQAIANELLPQIAEAIVAADDAMQLRLDAASRTILQDNAKLGGHLSDATDSDWDTEYLAPILAVKIIDGLDAAIDHINTHGSHHTDVIITNNYSKSQRFIREVDSASVMINASSRFADGFEYGLGAEIGISTDKIHARGPVGLNGLTSQKWIVYGHGEVRS.

This sequence belongs to the gamma-glutamyl phosphate reductase family.

Its subcellular location is the cytoplasm. It catalyses the reaction L-glutamate 5-semialdehyde + phosphate + NADP(+) = L-glutamyl 5-phosphate + NADPH + H(+). Its pathway is amino-acid biosynthesis; L-proline biosynthesis; L-glutamate 5-semialdehyde from L-glutamate: step 2/2. Catalyzes the NADPH-dependent reduction of L-glutamate 5-phosphate into L-glutamate 5-semialdehyde and phosphate. The product spontaneously undergoes cyclization to form 1-pyrroline-5-carboxylate. This Psychrobacter sp. (strain PRwf-1) protein is Gamma-glutamyl phosphate reductase.